The sequence spans 350 residues: Histidinol-phosphate aminotransferase (350 aa).

The residue at position 209 (lysine 209) is an N6-(pyridoxal phosphate)lysine.

This sequence belongs to the class-II pyridoxal-phosphate-dependent aminotransferase family. Histidinol-phosphate aminotransferase subfamily. Homodimer. The cofactor is pyridoxal 5'-phosphate.

The enzyme catalyses L-histidinol phosphate + 2-oxoglutarate = 3-(imidazol-4-yl)-2-oxopropyl phosphate + L-glutamate. The protein operates within amino-acid biosynthesis; L-histidine biosynthesis; L-histidine from 5-phospho-alpha-D-ribose 1-diphosphate: step 7/9. This Christiangramia forsetii (strain DSM 17595 / CGMCC 1.15422 / KT0803) (Gramella forsetii) protein is Histidinol-phosphate aminotransferase.